The primary structure comprises 100 residues: Large ribosomal subunit protein eL36B (100 aa).

Belongs to the eukaryotic ribosomal protein eL36 family. Component of the large ribosomal subunit (LSU). Mature yeast ribosomes consist of a small (40S) and a large (60S) subunit. The 40S small subunit contains 1 molecule of ribosomal RNA (18S rRNA) and 33 different proteins (encoded by 57 genes). The large 60S subunit contains 3 rRNA molecules (25S, 5.8S and 5S rRNA) and 46 different proteins (encoded by 81 genes).

The protein resides in the cytoplasm. Component of the ribosome, a large ribonucleoprotein complex responsible for the synthesis of proteins in the cell. The small ribosomal subunit (SSU) binds messenger RNAs (mRNAs) and translates the encoded message by selecting cognate aminoacyl-transfer RNA (tRNA) molecules. The large subunit (LSU) contains the ribosomal catalytic site termed the peptidyl transferase center (PTC), which catalyzes the formation of peptide bonds, thereby polymerizing the amino acids delivered by tRNAs into a polypeptide chain. The nascent polypeptides leave the ribosome through a tunnel in the LSU and interact with protein factors that function in enzymatic processing, targeting, and the membrane insertion of nascent chains at the exit of the ribosomal tunnel. The polypeptide is Large ribosomal subunit protein eL36B (Saccharomyces cerevisiae (strain ATCC 204508 / S288c) (Baker's yeast)).